Reading from the N-terminus, the 156-residue chain is Small ribosomal subunit protein uS7 (156 aa).

It belongs to the universal ribosomal protein uS7 family. In terms of assembly, part of the 30S ribosomal subunit. Contacts proteins S9 and S11.

Functionally, one of the primary rRNA binding proteins, it binds directly to 16S rRNA where it nucleates assembly of the head domain of the 30S subunit. Is located at the subunit interface close to the decoding center, probably blocks exit of the E-site tRNA. This chain is Small ribosomal subunit protein uS7, found in Frankia alni (strain DSM 45986 / CECT 9034 / ACN14a).